A 134-amino-acid polypeptide reads, in one-letter code: Profilin-1 (134 aa).

Cys13 and Cys118 are disulfide-bonded. Positions 84 to 100 match the Involved in PIP2 interaction motif; it reads AVIRGKKGSGGITIKKT. Residue Thr114 is modified to Phosphothreonine.

It belongs to the profilin family. Occurs in many kinds of cells as a complex with monomeric actin in a 1:1 ratio. In terms of processing, phosphorylated by MAP kinases.

It is found in the cytoplasm. It localises to the cytoskeleton. Functionally, binds to actin and affects the structure of the cytoskeleton. At high concentrations, profilin prevents the polymerization of actin, whereas it enhances it at low concentrations. The chain is Profilin-1 from Olea europaea (Common olive).